The chain runs to 540 residues: Cytochrome P450 27C1 (540 aa).

Cys-486 contacts heme.

It belongs to the cytochrome P450 family. Heme is required as a cofactor. As to expression, following L-thyroxine, expressed in the retinal pigment epithelium (at protein level).

Its subcellular location is the membrane. The enzyme catalyses all-trans-retinol + 2 reduced [adrenodoxin] + O2 + 2 H(+) = all-trans-3,4-didehydroretinol + 2 oxidized [adrenodoxin] + 2 H2O. Its function is as follows. Efficiently catalyzes the conversion of all-trans retinol (also called vitamin A1, the precursor of 11-cis retinal) to 3,4-didehydroretinol (also called vitamin A2, the precursor of 11-cis 3,4-didehydroretinal). Also acts on all-trans retinal and all-trans retinoic acid. The replacement of 11-cis retinal chromophore in photopigments with 11-cis 3,4-didehydroretinal enhances sensitivity to long-wavelength light. This may improve vision in fresh water which is often turbid. This Danio rerio (Zebrafish) protein is Cytochrome P450 27C1 (cyp27c1).